Reading from the N-terminus, the 89-residue chain is Small ribosomal subunit protein uS15 (89 aa).

Belongs to the universal ribosomal protein uS15 family. In terms of assembly, part of the 30S ribosomal subunit. Forms a bridge to the 50S subunit in the 70S ribosome, contacting the 23S rRNA.

In terms of biological role, one of the primary rRNA binding proteins, it binds directly to 16S rRNA where it helps nucleate assembly of the platform of the 30S subunit by binding and bridging several RNA helices of the 16S rRNA. Its function is as follows. Forms an intersubunit bridge (bridge B4) with the 23S rRNA of the 50S subunit in the ribosome. The protein is Small ribosomal subunit protein uS15 of Kineococcus radiotolerans (strain ATCC BAA-149 / DSM 14245 / SRS30216).